The sequence spans 163 residues: GPI-anchored protein LLG2 (163 aa).

A signal peptide spans methionine 1–serine 23. Asparagine 52 is a glycosylation site (N-linked (GlcNAc...) asparagine). Serine 135 is lipidated: GPI-anchor amidated serine. The propeptide at aspartate 136–serine 163 is removed in mature form.

As to expression, expressed in pollen, pollen tubes, sporophytic pistil tissues, in the early stages of female gametophyte development, and in unfertilized, mature ovules.

The protein resides in the cell membrane. This is GPI-anchored protein LLG2 from Arabidopsis thaliana (Mouse-ear cress).